The primary structure comprises 675 residues: NADH-ubiquinone oxidoreductase 75 kDa subunit (675 aa).

Residues 2–80 enclose the 2Fe-2S ferredoxin-type domain; that stretch reads KNISFKVNDF…SMNIYTNTLK (79 aa). Residues Cys-36, Cys-47, Cys-50, and Cys-64 each contribute to the [2Fe-2S] cluster site. The 40-residue stretch at 80–119 folds into the 4Fe-4S His(Cys)3-ligated-type domain; it reads KVKKARESVLEFLLANHPLDCPICDQGGECDLQDQSVVFG. [4Fe-4S] cluster contacts are provided by His-96, Cys-100, Cys-103, Cys-109, Cys-148, Cys-151, Cys-154, and Cys-198. One can recognise a 4Fe-4S Mo/W bis-MGD-type domain in the interval 217–273; it reads LKSYNSIDVLDSLHSNIRVDIRGTKIMRILPRVNSELNEDWITDKIRFSYDSFRRQR.

This sequence belongs to the complex I 75 kDa subunit family. As to quaternary structure, complex I is composed of about 30 different subunits. It depends on [2Fe-2S] cluster as a cofactor. The cofactor is [4Fe-4S] cluster.

Its subcellular location is the mitochondrion inner membrane. It carries out the reaction a ubiquinone + NADH + 5 H(+)(in) = a ubiquinol + NAD(+) + 4 H(+)(out). Core subunit of the mitochondrial membrane respiratory chain NADH dehydrogenase (Complex I) that is believed to belong to the minimal assembly required for catalysis. Complex I functions in the transfer of electrons from NADH to the respiratory chain. The immediate electron acceptor for the enzyme is believed to be ubiquinone. This is the largest subunit of complex I and it is a component of the iron-sulfur (IP) fragment of the enzyme. It may form part of the active site crevice where NADH is oxidized. This chain is NADH-ubiquinone oxidoreductase 75 kDa subunit (NAD11), found in Acanthamoeba castellanii (Amoeba).